A 351-amino-acid polypeptide reads, in one-letter code: Anthranilate phosphoribosyltransferase (351 aa).

Residues Gly-80, 83–84, Thr-88, 90–93, 108–116, and Ser-120 each bind 5-phospho-alpha-D-ribose 1-diphosphate; these read GD, NIST, and KHGNRSITS. Position 80 (Gly-80) interacts with anthranilate. Residue Ser-92 coordinates Mg(2+). Asn-111 is a binding site for anthranilate. Arg-166 contributes to the anthranilate binding site. Asp-229 and Glu-230 together coordinate Mg(2+).

It belongs to the anthranilate phosphoribosyltransferase family. In terms of assembly, homodimer. Requires Mg(2+) as cofactor.

It catalyses the reaction N-(5-phospho-beta-D-ribosyl)anthranilate + diphosphate = 5-phospho-alpha-D-ribose 1-diphosphate + anthranilate. The protein operates within amino-acid biosynthesis; L-tryptophan biosynthesis; L-tryptophan from chorismate: step 2/5. In terms of biological role, catalyzes the transfer of the phosphoribosyl group of 5-phosphorylribose-1-pyrophosphate (PRPP) to anthranilate to yield N-(5'-phosphoribosyl)-anthranilate (PRA). This chain is Anthranilate phosphoribosyltransferase, found in Chlorobaculum tepidum (strain ATCC 49652 / DSM 12025 / NBRC 103806 / TLS) (Chlorobium tepidum).